A 143-amino-acid chain; its full sequence is Transcriptional regulator MraZ (143 aa).

2 consecutive SpoVT-AbrB domains span residues threonine 5–glutamate 47 and alanine 76–serine 119.

It belongs to the MraZ family. As to quaternary structure, forms oligomers.

The protein resides in the cytoplasm. It is found in the nucleoid. The sequence is that of Transcriptional regulator MraZ from Micrococcus luteus (strain ATCC 4698 / DSM 20030 / JCM 1464 / CCM 169 / CCUG 5858 / IAM 1056 / NBRC 3333 / NCIMB 9278 / NCTC 2665 / VKM Ac-2230) (Micrococcus lysodeikticus).